The primary structure comprises 372 residues: N-methyl-L-tryptophan oxidase (372 aa).

4 to 34 (DLIIIGSGSVGAAAGYYATRAGLKVLMTDAH) contacts FAD. S-8alpha-FAD cysteine is present on Cys-307.

This sequence belongs to the MSOX/MTOX family. MTOX subfamily. In terms of assembly, monomer. The cofactor is FAD.

The enzyme catalyses N(alpha)-methyl-L-tryptophan + O2 + H2O = L-tryptophan + formaldehyde + H2O2. Functionally, catalyzes the oxidative demethylation of N-methyl-L-tryptophan. In Salmonella agona (strain SL483), this protein is N-methyl-L-tryptophan oxidase.